Reading from the N-terminus, the 469-residue chain is 3-isopropylmalate dehydratase large subunit (469 aa).

[4Fe-4S] cluster contacts are provided by cysteine 349, cysteine 409, and cysteine 412.

This sequence belongs to the aconitase/IPM isomerase family. LeuC type 1 subfamily. In terms of assembly, heterodimer of LeuC and LeuD. Requires [4Fe-4S] cluster as cofactor.

It catalyses the reaction (2R,3S)-3-isopropylmalate = (2S)-2-isopropylmalate. It participates in amino-acid biosynthesis; L-leucine biosynthesis; L-leucine from 3-methyl-2-oxobutanoate: step 2/4. Functionally, catalyzes the isomerization between 2-isopropylmalate and 3-isopropylmalate, via the formation of 2-isopropylmaleate. In Methylorubrum populi (strain ATCC BAA-705 / NCIMB 13946 / BJ001) (Methylobacterium populi), this protein is 3-isopropylmalate dehydratase large subunit.